The sequence spans 76 residues: Small proline-rich protein 2I (76 aa).

3 tandem repeats follow at residues 21–29 (KKCPEPCPP), 30–38 (PQCPEPCPP), and 39–47 (PKCPEPCPE). Positions 21–47 (KKCPEPCPPPQCPEPCPPPKCPEPCPE) are 3 X 9 AA approximate tandem repeats. Pro residues predominate over residues 40 to 53 (KCPEPCPESCPPPS). Residues 40 to 76 (KCPEPCPESCPPPSYQQKCPPVQPPPPCQQKCPPKSK) are disordered.

Belongs to the cornifin (SPRR) family. In terms of tissue distribution, not expressed in uterus.

The protein localises to the cytoplasm. Its function is as follows. Cross-linked envelope protein of keratinocytes. It is a keratinocyte protein that first appears in the cell cytosol, but ultimately becomes cross-linked to membrane proteins by transglutaminase. All that results in the formation of an insoluble envelope beneath the plasma membrane. In Mus musculus (Mouse), this protein is Small proline-rich protein 2I (Sprr2i).